Consider the following 257-residue polypeptide: Aspartate/glutamate leucyltransferase (257 aa).

The protein belongs to the R-transferase family. Bpt subfamily.

It is found in the cytoplasm. The catalysed reaction is N-terminal L-glutamyl-[protein] + L-leucyl-tRNA(Leu) = N-terminal L-leucyl-L-glutamyl-[protein] + tRNA(Leu) + H(+). It carries out the reaction N-terminal L-aspartyl-[protein] + L-leucyl-tRNA(Leu) = N-terminal L-leucyl-L-aspartyl-[protein] + tRNA(Leu) + H(+). Its function is as follows. Functions in the N-end rule pathway of protein degradation where it conjugates Leu from its aminoacyl-tRNA to the N-termini of proteins containing an N-terminal aspartate or glutamate. The sequence is that of Aspartate/glutamate leucyltransferase from Rhodopseudomonas palustris (strain HaA2).